Here is an 843-residue protein sequence, read N- to C-terminus: MPLSYQHFRKMLLLDEEAGPLEEELPRLADEGLNRRVAEDLNLGDLNVSIPWTHKVGNFTGLYSSTVPCFNPQWQTPSFPSIHLQEDIVDRCKQFVGPLTVNENRRLKLIMPARFYPNVTKYLPLDKGIKPYYPEYIVDHYFQTRHYLHTLWKAGILYKRESTRSASFCGSPYSWEQDLQHGRLVFQTSKRHGDKSFCPQSPGILPRSSVGPCIQSQLRKSRLGPQPAQGQLAGRQQGGSGSIRARVHPSPWGTVGVEPSGSGPTHNCASSSSSCLHQSAVRKAAYSLLSTSKGHSSSGHAVELHNFPPNSSRFQSQGPVPSCWWLQFRNSEPCSEYCLSHIVNLIEDWGPCTEHGEHRIRTPRTPARVTGGVFLVDKNPHNTTESRLVVDFSQFSRGNTRVSWPKFAVPNLQSLTNLLSSNLSWLSLDVSAAFYHLPLHPAAMPHLLVGSSGLSRYVARLSSHSRINNNQHGTMQNLHNSCSRNLYVSLMLLYKTYGRKLHLYSHPIILGFRKIPMGVGLSPFLLAQFTSAICSVVRRAFPHCLAFSYMDDVVLGAKSVQHLEALYAAVTNFLLSLGIHLNPHKTKRWGYSLNFMGYVIGSWGTLPQEHIVQKIKMCFRKLPVNRPIDWKVCQRIVGLLGFAAPFTQCGYPALMPLYACIQAKQAFTFSPTYKAFLSKQYLNLYPVARQRPGLCQVFRDATPTGWGLAIGHQRMRGTFVSPLPIHTAELLAACFARSRSGAKLIGTHNSVVLSRKYTSFPWLLGCAANWILRGTSFVYVPSALNPADDPSRGRLGLYRPLLRLPYQPTTGRTSLYADSPSVPSHLPDRVHFASPLHVAWRPP.

Residues 1-177 (MPLSYQHFRK…FCGSPYSWEQ (177 aa)) are terminal protein domain (TP). Residues 178 to 346 (DLQHGRLVFQ…YCLSHIVNLI (169 aa)) form a spacer region. The segment at 219-269 (RKSRLGPQPAQGQLAGRQQGGSGSIRARVHPSPWGTVGVEPSGSGPTHNCA) is disordered. Residues 223–235 (LGPQPAQGQLAGR) are compositionally biased toward low complexity. Residues 347–690 (EDWGPCTEHG…YLNLYPVARQ (344 aa)) are polymerase/reverse transcriptase domain (RT). A Reverse transcriptase domain is found at 357–600 (EHRIRTPRTP…YSLNFMGYVI (244 aa)). The Mg(2+) site is built by Asp429, Asp551, and Asp552.

It belongs to the hepadnaviridae P protein family.

The catalysed reaction is DNA(n) + a 2'-deoxyribonucleoside 5'-triphosphate = DNA(n+1) + diphosphate. It catalyses the reaction Endonucleolytic cleavage to 5'-phosphomonoester.. With respect to regulation, activated by host HSP70 and HSP40 in vitro to be able to bind the epsilon loop of the pgRNA. Because deletion of the RNase H region renders the protein partly chaperone-independent, the chaperones may be needed indirectly to relieve occlusion of the RNA-binding site by this domain. Inhibited by several reverse-transcriptase inhibitors: Lamivudine, Adefovir and Entecavir. In terms of biological role, multifunctional enzyme that converts the viral RNA genome into dsDNA in viral cytoplasmic capsids. This enzyme displays a DNA polymerase activity that can copy either DNA or RNA templates, and a ribonuclease H (RNase H) activity that cleaves the RNA strand of RNA-DNA heteroduplexes in a partially processive 3'- to 5'-endonucleasic mode. Neo-synthesized pregenomic RNA (pgRNA) are encapsidated together with the P protein, and reverse-transcribed inside the nucleocapsid. Initiation of reverse-transcription occurs first by binding the epsilon loop on the pgRNA genome, and is initiated by protein priming, thereby the 5'-end of (-)DNA is covalently linked to P protein. Partial (+)DNA is synthesized from the (-)DNA template and generates the relaxed circular DNA (RC-DNA) genome. After budding and infection, the RC-DNA migrates in the nucleus, and is converted into a plasmid-like covalently closed circular DNA (cccDNA). The activity of P protein does not seem to be necessary for cccDNA generation, and is presumably released from (+)DNA by host nuclear DNA repair machinery. This chain is Protein P, found in Hepatitis B virus genotype B2 subtype adw (isolate China/patient4/1996) (HBV-B).